A 381-amino-acid polypeptide reads, in one-letter code: MAVRLPRGFRAGATRAGIKPSGRPDLALLVSGLPAAWAYAATQNRAAAPSIHRGRALYASGKPLRAVVVNAGNANCATGERGYEDDRRMAELAALRLGLSPEEVLTASTGVIGVPLPVEKIAKGLPEIGLTPFAEAFAEAILTTDTRPKVAEAEVAGARIVGLAKGSGMIHPNMATMLAFLVTDALVPQEALRAGWRRVVERTFNQVTVDGDTSTNDLALLMANGAYGEVPLKAFFEGVEAVAQELARMIARDGEGATKLMVVRVVGAATEEEARRAARAIAGSALWKSALYGNDPNWGRILAALGNSGARFDPLRVRIVLQGIPLYEGAVLPFDREEAGQAMRAEEVEVLVDLREGQGAGEAYGCDLTEDYVRINALYTT.

Residues Thr143, Lys165, Thr176, Glu255, Asn376, and Thr381 each coordinate substrate. Residue Thr176 is the Nucleophile of the active site.

Belongs to the ArgJ family. As to quaternary structure, heterotetramer of two alpha and two beta chains.

It is found in the cytoplasm. The enzyme catalyses N(2)-acetyl-L-ornithine + L-glutamate = N-acetyl-L-glutamate + L-ornithine. The catalysed reaction is L-glutamate + acetyl-CoA = N-acetyl-L-glutamate + CoA + H(+). The protein operates within amino-acid biosynthesis; L-arginine biosynthesis; L-ornithine and N-acetyl-L-glutamate from L-glutamate and N(2)-acetyl-L-ornithine (cyclic): step 1/1. It participates in amino-acid biosynthesis; L-arginine biosynthesis; N(2)-acetyl-L-ornithine from L-glutamate: step 1/4. In terms of biological role, catalyzes two activities which are involved in the cyclic version of arginine biosynthesis: the synthesis of N-acetylglutamate from glutamate and acetyl-CoA as the acetyl donor, and of ornithine by transacetylation between N(2)-acetylornithine and glutamate. The sequence is that of Arginine biosynthesis bifunctional protein ArgJ from Thermus thermophilus (strain ATCC BAA-163 / DSM 7039 / HB27).